The primary structure comprises 112 residues: Iron-sulfur cluster assembly protein CyaY (112 aa).

It belongs to the frataxin family.

Involved in iron-sulfur (Fe-S) cluster assembly. May act as a regulator of Fe-S biogenesis. This Herminiimonas arsenicoxydans protein is Iron-sulfur cluster assembly protein CyaY.